A 233-amino-acid chain; its full sequence is DnaA regulatory inactivator Hda (233 aa).

Belongs to the DnaA family. HdA subfamily. In terms of assembly, the active form seems to be an ADP-bound monomer. Forms the RIDA complex (regulatory inactivation of DnaA) of ATP-DnaA, ADP-Hda and the DNA-loaded beta sliding clamp (dnaN).

Its function is as follows. Mediates the interaction of DNA replication initiator protein DnaA with DNA polymerase subunit beta sliding clamp (dnaN). Stimulates hydrolysis of ATP-DnaA to ADP-DnaA, rendering DnaA inactive for reinitiation, a process called regulatory inhibition of DnaA or RIDA. The sequence is that of DnaA regulatory inactivator Hda from Shigella boydii serotype 4 (strain Sb227).